Reading from the N-terminus, the 449-residue chain is UMP-CMP kinase 2, mitochondrial (449 aa).

Residues 1-98 constitute a mitochondrion transit peptide; the sequence is MAFARRLLRG…VRAARLHQRL (98 aa). 259-266 is a binding site for ATP; sequence GLDATGKT. The stretch at 380–412 forms a coiled coil; it reads EERLQRLQGRGMEKTREEAELEANSVFRQKVEM.

The protein belongs to the thymidylate kinase family. As to expression, high levels are observed in myeloid, lymphoid and mesenchymal tissues.

Its subcellular location is the mitochondrion. It catalyses the reaction CMP + ATP = CDP + ADP. The catalysed reaction is dCMP + ATP = dCDP + ADP. The enzyme catalyses a 2'-deoxyribonucleoside 5'-diphosphate + ATP = a 2'-deoxyribonucleoside 5'-triphosphate + ADP. It carries out the reaction a ribonucleoside 5'-diphosphate + ATP = a ribonucleoside 5'-triphosphate + ADP. Mitochondrial nucleotide monophosphate kinase needed for salvage dNTP synthesis that mediates immunomodulatory and antiviral activities through IFN-dependent and IFN-independent pathways. Restricts the replication of multiple viruses including flaviviruses or coronaviruses. Together with viperin/RSAD2 and ddhCTP, suppresses the replication of several coronaviruses through inhibition of the viral RNA-dependent RNA polymerase activities. Concerning flaviviruses, restricts RNA translation when localized to the mitochondria independently of its kinase activity. Is able to phosphorylate dUMP, dCMP, CMP, UMP and monophosphates of the pyrimidine nucleoside analogs ddC, dFdC, araC, BVDU and FdUrd with ATP as phosphate donor. Efficacy is highest for dUMP followed by dCMP while CMP and UMP are poor substrates. Controls therefore mitochondrial DNA synthesis by supplying required deoxyribonucleotides. CMPK2-dependent mitochondrial DNA synthesis is necessary for the production of oxidized mitochondrial DNA fragments after exposure to NLRP3 activators. In turn, cytosolic oxidized mtDNA associates with the NLRP3 inflammasome complex and is required for its activation. The chain is UMP-CMP kinase 2, mitochondrial (CMPK2) from Homo sapiens (Human).